The chain runs to 103 residues: Iron-sulfur cluster assembly protein CyaY (103 aa).

The protein belongs to the frataxin family.

In terms of biological role, involved in iron-sulfur (Fe-S) cluster assembly. May act as a regulator of Fe-S biogenesis. In Rickettsia peacockii (strain Rustic), this protein is Iron-sulfur cluster assembly protein CyaY.